The following is a 433-amino-acid chain: 23S rRNA (uracil(1939)-C(5))-methyltransferase RlmD (433 aa).

The region spanning 10-68 is the TRAM domain; that stretch reads RTTTRQIITVSVNDLDSFGQGVARHNGKTLFIPGLLPQENAEVTVTEDKKQYARAKVVR. Positions 81, 87, 90, and 162 each coordinate [4Fe-4S] cluster. Positions 265, 294, 299, 315, 342, and 363 each coordinate S-adenosyl-L-methionine. Residue Cys-389 is the Nucleophile of the active site.

Belongs to the class I-like SAM-binding methyltransferase superfamily. RNA M5U methyltransferase family. RlmD subfamily.

It catalyses the reaction uridine(1939) in 23S rRNA + S-adenosyl-L-methionine = 5-methyluridine(1939) in 23S rRNA + S-adenosyl-L-homocysteine + H(+). Its function is as follows. Catalyzes the formation of 5-methyl-uridine at position 1939 (m5U1939) in 23S rRNA. This Escherichia coli O6:K15:H31 (strain 536 / UPEC) protein is 23S rRNA (uracil(1939)-C(5))-methyltransferase RlmD.